Reading from the N-terminus, the 421-residue chain is Granaticin polyketide putative beta-ketoacyl synthase 1 (421 aa).

In terms of domain architecture, Ketosynthase family 3 (KS3) spans 2–416; that stretch reads TRRVVITGVG…GFQSAMVLHR (415 aa). Catalysis depends on for beta-ketoacyl synthase activity residues Cys169, His309, and His346.

It belongs to the thiolase-like superfamily. Beta-ketoacyl-ACP synthases family.

It functions in the pathway antibiotic biosynthesis; granaticin biosynthesis. This Streptomyces violaceoruber protein is Granaticin polyketide putative beta-ketoacyl synthase 1 (gra-orf1).